A 746-amino-acid chain; its full sequence is Chitin biosynthesis protein CHS6 (746 aa).

Residues 1-25 (MNLFWPSETKKQNEIPGGDYTPGNS) are disordered. The CHS5-binding stretch occupies residues 734–746 (LAWIADLDHTVQP).

The protein belongs to the CHAPS family. As to quaternary structure, component of the CHS5/6 complex composed of the 4 CHAPS proteins BCH1, BCH2, BUD7, and CHS6 as well as at least CHS5 and GTP-bound ARF1. The complex interacts with the cargo protein CHS3.

The protein resides in the golgi apparatus. It is found in the trans-Golgi network membrane. Member of the CHS5-ARF1P-binding proteins (CHAPS) which mediates export of specific cargo proteins, including chitin synthase CHS3. The sequence is that of Chitin biosynthesis protein CHS6 (CHS6) from Saccharomyces cerevisiae (strain ATCC 204508 / S288c) (Baker's yeast).